A 508-amino-acid polypeptide reads, in one-letter code: UDP-N-acetylmuramoyl-L-alanyl-D-glutamate--L-lysine ligase (508 aa).

S47 contacts UDP-N-acetyl-alpha-D-muramoyl-L-alanyl-D-glutamate. Position 124–130 (124–130) interacts with ATP; it reads GTKGKTT. Residues 168–169, S195, and R203 each bind UDP-N-acetyl-alpha-D-muramoyl-L-alanyl-D-glutamate; that span reads TT. K237 bears the N6-carboxylysine mark. An L-lysine recognition motif motif is present at residues 425–428; it reads DDPA.

It belongs to the MurCDEF family. MurE subfamily. Post-translationally, carboxylation is probably crucial for Mg(2+) binding and, consequently, for the gamma-phosphate positioning of ATP.

It is found in the cytoplasm. The enzyme catalyses UDP-N-acetyl-alpha-D-muramoyl-L-alanyl-D-glutamate + L-lysine + ATP = UDP-N-acetyl-alpha-D-muramoyl-L-alanyl-gamma-D-glutamyl-L-lysine + ADP + phosphate + H(+). It participates in cell wall biogenesis; peptidoglycan biosynthesis. Catalyzes the addition of L-lysine to the nucleotide precursor UDP-N-acetylmuramoyl-L-alanyl-D-glutamate (UMAG) in the biosynthesis of bacterial cell-wall peptidoglycan. This Enterococcus faecalis (strain ATCC 700802 / V583) protein is UDP-N-acetylmuramoyl-L-alanyl-D-glutamate--L-lysine ligase.